The sequence spans 428 residues: MRIYPLEKSLNLTIDDIAADKSISHRCAMFSLLSDKPSRVRNYLRAGDTLNTLKIVELLGAKIEDNGAEIIITPPQKIKEPNEILECGNSGTAMRLFMGLLAAQDGFFVLSGDKYLNSRPMARIAKPLNEMGAKIDGANNANNAPLCIRGTKFERFSFDSKIASAQVKSALLLAALYSNGCKFSEPELSRDHTERMLAGMGANIKRDELEITLEPMRSPLSPLDIDVPNDPSSAFFFAVAALIIPNSHIILKNILLNKTRIEAYRVLEKMGAEIKFHKTSSKYEDIGDIEVRYSPNLKGIEVSENISWLIDEAPALAIAFACAKGQSKLTNAKELRVKESDRIAVTINALKQCGVDASELEDGFIINGSEAKFATIDSHGDHRIAMSFAILGLKCGMQIEKSEFIATSFPNFAEILKKMGARVEDRAC.

The 3-phosphoshikimate site is built by lysine 21, serine 22, and arginine 26. Lysine 21 lines the phosphoenolpyruvate pocket. Residues glycine 91 and arginine 119 each coordinate phosphoenolpyruvate. Positions 164, 166, 311, and 338 each coordinate 3-phosphoshikimate. Glutamine 166 provides a ligand contact to phosphoenolpyruvate. Aspartate 311 functions as the Proton acceptor in the catalytic mechanism. Phosphoenolpyruvate is bound by residues arginine 342 and arginine 383.

It belongs to the EPSP synthase family. Monomer.

The protein localises to the cytoplasm. It carries out the reaction 3-phosphoshikimate + phosphoenolpyruvate = 5-O-(1-carboxyvinyl)-3-phosphoshikimate + phosphate. Its pathway is metabolic intermediate biosynthesis; chorismate biosynthesis; chorismate from D-erythrose 4-phosphate and phosphoenolpyruvate: step 6/7. In terms of biological role, catalyzes the transfer of the enolpyruvyl moiety of phosphoenolpyruvate (PEP) to the 5-hydroxyl of shikimate-3-phosphate (S3P) to produce enolpyruvyl shikimate-3-phosphate and inorganic phosphate. The polypeptide is 3-phosphoshikimate 1-carboxyvinyltransferase (Campylobacter concisus (strain 13826)).